Consider the following 377-residue polypeptide: T-protein (377 aa).

Residues M1–G92 form the Chorismate mutase domain. The Prephenate/arogenate dehydrogenase domain maps to H101 to S364.

This sequence in the C-terminal section; belongs to the prephenate/arogenate dehydrogenase family.

It localises to the cytoplasm. The catalysed reaction is chorismate = prephenate. It catalyses the reaction prephenate + NAD(+) = 3-(4-hydroxyphenyl)pyruvate + CO2 + NADH. The protein operates within amino-acid biosynthesis; L-tyrosine biosynthesis; (4-hydroxyphenyl)pyruvate from prephenate (NAD(+) route): step 1/1. Its pathway is metabolic intermediate biosynthesis; prephenate biosynthesis; prephenate from chorismate: step 1/1. The polypeptide is T-protein (tyrA) (Haemophilus influenzae (strain ATCC 51907 / DSM 11121 / KW20 / Rd)).